We begin with the raw amino-acid sequence, 329 residues long: Sex comb on midleg-like protein 1 (329 aa).

Residues serine 138 and serine 238 each carry the phosphoserine modification. The segment at 138-157 (SPTLPVSRRENNSPSNLPRP) is disordered. The SAM domain maps to 258-325 (WSVEAVVLFL…YYIDRLKQGK (68 aa)).

This sequence belongs to the SCM family.

The protein localises to the nucleus. Its function is as follows. Putative Polycomb group (PcG) protein. PcG proteins act by forming multiprotein complexes, which are required to maintain the transcriptionally repressive state of homeotic genes throughout development. May be involved in spermatogenesis during sexual maturation. The chain is Sex comb on midleg-like protein 1 (SCML1) from Pan troglodytes (Chimpanzee).